Here is a 62-residue protein sequence, read N- to C-terminus: Photosystem II reaction center protein Z (62 aa).

Transmembrane regions (helical) follow at residues 8–28 (AIFA…VVFA) and 41–61 (FSGT…NSLI).

It belongs to the PsbZ family. PSII is composed of 1 copy each of membrane proteins PsbA, PsbB, PsbC, PsbD, PsbE, PsbF, PsbH, PsbI, PsbJ, PsbK, PsbL, PsbM, PsbT, PsbY, PsbZ, Psb30/Ycf12, at least 3 peripheral proteins of the oxygen-evolving complex and a large number of cofactors. It forms dimeric complexes.

It localises to the plastid. Its subcellular location is the chloroplast thylakoid membrane. Its function is as follows. May control the interaction of photosystem II (PSII) cores with the light-harvesting antenna, regulates electron flow through the 2 photosystem reaction centers. PSII is a light-driven water plastoquinone oxidoreductase, using light energy to abstract electrons from H(2)O, generating a proton gradient subsequently used for ATP formation. In Acorus gramineus (Dwarf sweet flag), this protein is Photosystem II reaction center protein Z.